Consider the following 236-residue polypeptide: Ribonuclease PH (236 aa).

Phosphate contacts are provided by residues Arg-86 and 124–126 (GTR).

The protein belongs to the RNase PH family. As to quaternary structure, homohexameric ring arranged as a trimer of dimers.

The catalysed reaction is tRNA(n+1) + phosphate = tRNA(n) + a ribonucleoside 5'-diphosphate. Phosphorolytic 3'-5' exoribonuclease that plays an important role in tRNA 3'-end maturation. Removes nucleotide residues following the 3'-CCA terminus of tRNAs; can also add nucleotides to the ends of RNA molecules by using nucleoside diphosphates as substrates, but this may not be physiologically important. Probably plays a role in initiation of 16S rRNA degradation (leading to ribosome degradation) during starvation. The chain is Ribonuclease PH from Thermodesulfovibrio yellowstonii (strain ATCC 51303 / DSM 11347 / YP87).